A 201-amino-acid polypeptide reads, in one-letter code: Potassium-transporting ATPase KdpC subunit (201 aa).

The helical transmembrane segment at 9–29 (ILVMLALTLITGLLYPLAMTV) threads the bilayer. Polar residues-rich tracts occupy residues 73–84 (TTAADPNDSTKT) and 91–101 (AANSSGSNLGP). Residues 73 to 103 (TTAADPNDSTKTVPAPYNAANSSGSNLGPTS) are disordered.

It belongs to the KdpC family. The system is composed of three essential subunits: KdpA, KdpB and KdpC.

The protein resides in the cell inner membrane. Its function is as follows. Part of the high-affinity ATP-driven potassium transport (or Kdp) system, which catalyzes the hydrolysis of ATP coupled with the electrogenic transport of potassium into the cytoplasm. This subunit acts as a catalytic chaperone that increases the ATP-binding affinity of the ATP-hydrolyzing subunit KdpB by the formation of a transient KdpB/KdpC/ATP ternary complex. The sequence is that of Potassium-transporting ATPase KdpC subunit from Bradyrhizobium sp. (strain BTAi1 / ATCC BAA-1182).